We begin with the raw amino-acid sequence, 108 residues long: Biogenesis of lysosome-related organelles complex 1 subunit CNL1 (108 aa).

The protein belongs to the BLOC1S4 family. In terms of assembly, component of the biogenesis of lysosome-related organelles complex-1 (BLOC-1).

It localises to the cytoplasm. Functionally, component of the biogenesis of lysosome-related organelles complex-1 (BLOC-1), a complex that is involved in endosomal cargo sorting. The polypeptide is Biogenesis of lysosome-related organelles complex 1 subunit CNL1 (CLN1) (Zygosaccharomyces rouxii (strain ATCC 2623 / CBS 732 / NBRC 1130 / NCYC 568 / NRRL Y-229)).